Here is a 135-residue protein sequence, read N- to C-terminus: Mini-ribonuclease 3 (135 aa).

The active site involves Asp-19.

This sequence belongs to the MrnC RNase family. Homodimer. Mg(2+) serves as cofactor.

The protein localises to the cytoplasm. Involved in correct processing of both the 5' and 3' ends of 23S rRNA precursor. Processes 30S rRNA precursor transcript even in absence of ribonuclease 3 (Rnc); Rnc processes 30S rRNA into smaller rRNA precursors. In Gloeobacter violaceus (strain ATCC 29082 / PCC 7421), this protein is Mini-ribonuclease 3.